Reading from the N-terminus, the 134-residue chain is D-ribose pyranase (134 aa).

Residue His20 is the Proton donor of the active site. Residues Asp28, His101, and Tyr123–Asn125 contribute to the substrate site.

Belongs to the RbsD / FucU family. RbsD subfamily. As to quaternary structure, homodecamer.

It localises to the cytoplasm. The catalysed reaction is beta-D-ribopyranose = beta-D-ribofuranose. It functions in the pathway carbohydrate metabolism; D-ribose degradation; D-ribose 5-phosphate from beta-D-ribopyranose: step 1/2. Catalyzes the interconversion of beta-pyran and beta-furan forms of D-ribose. This chain is D-ribose pyranase, found in Pseudomonas fluorescens (strain SBW25).